The sequence spans 715 residues: Myosin light chain kinase 3 (715 aa).

The tract at residues 67–114 (VTLPNDPSSQHSPEAHTGASEPLKPVSAGESSKALQKAKEISVKSSEP) is disordered. Residues 404–659 (VNPVEVLGGG…ASGCMKHSWL (256 aa)) enclose the Protein kinase domain. ATP is bound by residues 410-418 (LGGGRFGQV) and Lys-433. The active-site Proton acceptor is the Asp-525.

This sequence belongs to the protein kinase superfamily. CAMK Ser/Thr protein kinase family. The cofactor is Mg(2+). Post-translationally, phosphorylated on serine residues.

The protein localises to the cytoplasm. It carries out the reaction L-seryl-[myosin light chain] + ATP = O-phospho-L-seryl-[myosin light chain] + ADP + H(+). The catalysed reaction is L-threonyl-[myosin light chain] + ATP = O-phospho-L-threonyl-[myosin light chain] + ADP + H(+). Functionally, kinase that phosphorylates MYL2 in vitro. Increases cardiomyocyte contractility. Required for sarcomere formation in the developing heart. This chain is Myosin light chain kinase 3 (mylk3), found in Danio rerio (Zebrafish).